The following is a 45-amino-acid chain: Iota-conotoxin-like R11.10 (45 aa).

4 cysteine pairs are disulfide-bonded: Cys-5–Cys-19, Cys-12–Cys-22, Cys-18–Cys-27, and Cys-21–Cys-36. At Leu-43 the chain carries D-leucine. A propeptide (removed by a carboxypeptidase) is located at residue Arg-45.

It belongs to the conotoxin I1 superfamily. Expressed by the venom duct.

The protein localises to the secreted. Functionally, iota-conotoxins bind to voltage-gated sodium channels (Nav) and act as agonists by shifting the voltage-dependence of activation to more hyperpolarized levels. Produces general excitatory symptoms. The protein is Iota-conotoxin-like R11.10 of Conus radiatus (Rayed cone).